We begin with the raw amino-acid sequence, 426 residues long: F-box protein At2g15640 (426 aa).

In terms of domain architecture, F-box spans 1 to 48 (MNPSTITNDLTVEILSRLPAKSVARFHCVSKQWGSIFGSPYFKELFLT).

This Arabidopsis thaliana (Mouse-ear cress) protein is F-box protein At2g15640.